We begin with the raw amino-acid sequence, 417 residues long: Lactose permease (417 aa).

Methionine 1 is subject to N-formylmethionine; partial. Over 1 to 7 (MYYLKNT) the chain is Cytoplasmic. The helical transmembrane segment at 8–34 (NFWMFGLFFFFYFFIMGAYFPFFPIWL) threads the bilayer. Topologically, residues 35-41 (HDINHIS) are periplasmic. A helical transmembrane segment spans residues 42–70 (KSDTGIIFAAISLFSLLFQPLFGLLSDKL). Topologically, residues 71–74 (GLRK) are cytoplasmic. The helical transmembrane segment at 75–100 (YLLWIITGMLVMFAPFFIFIFGPLLQ) threads the bilayer. Over 101-104 (YNIL) the chain is Periplasmic. The chain crosses the membrane as a helical span at residues 105–129 (VGSIVGGIYLGFCFNAGAPAVEAFI). The Cytoplasmic segment spans residues 130–140 (EKVSRRSNFEF). The helical transmembrane segment at 141–163 (GRARMFGCVGWALCASIVGIMFT) threads the bilayer. Topologically, residues 164 to 166 (INN) are periplasmic. A helical membrane pass occupies residues 167–186 (QFVFWLGSGCALILAVLLFF). Topologically, residues 187–220 (AKTDAPSSATVANAVGANHSAFSLKLALELFRQP) are cytoplasmic. Residues 221–249 (KLWFLSLYVIGVSCTYDVFDQQFANFFTS) traverse the membrane as a helical segment. The Periplasmic portion of the chain corresponds to 250–253 (FFAT). A helical transmembrane segment spans residues 254 to 278 (GEQGTRVFGYVTTMGELLNASIMFF). Residues 279–288 (APLIINRIGG) lie on the Cytoplasmic side of the membrane. A helical transmembrane segment spans residues 289–308 (KNALLLAGTIMSVRIIGSSF). Topologically, residues 309–311 (ATS) are periplasmic. The helical transmembrane segment at 312–334 (ALEVVILKTLHMFEVPFLLVGCF) threads the bilayer. Residues 335-346 (KYITSQFEVRFS) are Cytoplasmic-facing. The chain crosses the membrane as a helical span at residues 347–374 (ATIYLVCFCFFKQLAMIFMSVLAGNMYE). Topologically, residues 375–377 (SIG) are periplasmic. Residues 378–398 (FQGAYLVLGLVALGFTLISVF) traverse the membrane as a helical segment. The Cytoplasmic segment spans residues 399–417 (TLSGPGPLSLLRRQVNEVA).

As to quaternary structure, monomer.

Its subcellular location is the cell inner membrane. It carries out the reaction lactose(in) + H(+)(in) = lactose(out) + H(+)(out). It catalyses the reaction melibiose(in) + H(+)(in) = melibiose(out) + H(+)(out). With respect to regulation, inhibited by the proton ionophore carbonyl cyanide m-chlorophenylhydrazone (CCCP). Responsible for transport of beta-galactosides into the cell, with the concomitant import of a proton (symport system). Can transport lactose, melibiose, the synthetic disaccharide lactulose or the analog methyl-1-thio-beta,D-galactopyranoside (TMG), but not sucrose or fructose. The substrate specificity is directed toward the galactopyranosyl moiety of the substrate. In Escherichia coli (strain K12), this protein is Lactose permease.